Consider the following 182-residue polypeptide: Prorelaxin (182 aa).

An N-terminal signal peptide occupies residues 1–24 (MPRLFSYLLGVWLLLSQLPREIPG). Gln-25 is subject to Pyrrolidone carboxylic acid. 3 cysteine pairs are disulfide-bonded: Cys-34–Cys-169, Cys-46–Cys-182, and Cys-168–Cys-173. Residues 57–154 (SLEEPQLETG…LKNLGLDKHS (98 aa)) constitute a propeptide, connecting peptide. Residues 159–160 (LF) constitute a propeptide that is removed on maturation.

Belongs to the insulin family. In terms of assembly, heterodimer of a B chain and an A chain linked by two disulfide bonds.

Its subcellular location is the secreted. Functionally, relaxin is an ovarian hormone that acts with estrogen to produce dilatation of the birth canal in many mammals. This Sus scrofa (Pig) protein is Prorelaxin (RLN).